We begin with the raw amino-acid sequence, 293 residues long: 4-hydroxy-tetrahydrodipicolinate synthase (293 aa).

Thr-45 is a pyruvate binding site. Tyr-133 (proton donor/acceptor) is an active-site residue. Catalysis depends on Lys-161, which acts as the Schiff-base intermediate with substrate. Ile-204 lines the pyruvate pocket.

The protein belongs to the DapA family. Homotetramer; dimer of dimers.

The protein localises to the cytoplasm. It catalyses the reaction L-aspartate 4-semialdehyde + pyruvate = (2S,4S)-4-hydroxy-2,3,4,5-tetrahydrodipicolinate + H2O + H(+). It functions in the pathway amino-acid biosynthesis; L-lysine biosynthesis via DAP pathway; (S)-tetrahydrodipicolinate from L-aspartate: step 3/4. In terms of biological role, catalyzes the condensation of (S)-aspartate-beta-semialdehyde [(S)-ASA] and pyruvate to 4-hydroxy-tetrahydrodipicolinate (HTPA). The chain is 4-hydroxy-tetrahydrodipicolinate synthase from Yersinia pseudotuberculosis serotype O:1b (strain IP 31758).